Consider the following 439-residue polypeptide: uncharacterized protein (439 aa).

2 CBS domains span residues 195–254 (LTPA…SIEK) and 256–314 (MTKN…KQPQ).

This is an uncharacterized protein from Bacillus subtilis (strain 168).